Reading from the N-terminus, the 277-residue chain is Large ribosomal subunit protein uL2c (277 aa).

The span at 1 to 11 shows a compositional bias: polar residues; it reads MNTRSYSTFTP. Disordered regions lie at residues 1–47 and 254–277; these read MNTR…RNNS and YSAL…RRRK.

The protein belongs to the universal ribosomal protein uL2 family. Part of the 50S ribosomal subunit.

It localises to the plastid. The protein localises to the chloroplast. In Cryptomeria japonica (Japanese cedar), this protein is Large ribosomal subunit protein uL2c (rpl2).